The sequence spans 1242 residues: Protein STU1 (1242 aa).

2 stretches are compositionally biased toward low complexity: residues 138-156 and 548-567; these read LNSS…TATK and AASP…PSSA. Disordered stretches follow at residues 138–161, 538–612, 637–711, 748–839, 853–884, and 1077–1111; these read LNSS…KPHE, KQLE…NPVF, HVET…LGLG, AEHE…NGNI, AFQT…RPEA, and HPAP…EKRT. A compositionally biased stretch (basic and acidic residues) spans 574–593; it reads KKMDLKAMLAERRRAVKEAG. Low complexity-rich tracts occupy residues 640–660 and 701–711; these read TSSP…RIRP and SPSLSPSLGLG. Basic and acidic residues predominate over residues 748 to 767; sequence AEHEVDELTLKEGQKTRDDG. Composition is skewed to polar residues over residues 802 to 815, 824 to 837, and 856 to 871; these read QQGN…SGRV, ATGT…SRNG, and TPLN…SSAI. Low complexity predominate over residues 1082-1104; it reads SSSADNSDPMTSALSQLSLSSSK.

It belongs to the CLASP family. Interacts with microtubules.

The protein resides in the cytoplasm. The protein localises to the cytoskeleton. Its subcellular location is the nucleus. It is found in the spindle. In terms of biological role, microtubule binding protein that promotes the stabilization of dynamic microtubules. Required for mitotic spindle formation. This Cryptococcus neoformans var. neoformans serotype D (strain B-3501A) (Filobasidiella neoformans) protein is Protein STU1 (STU1).